We begin with the raw amino-acid sequence, 874 residues long: MKTTSEIRQSFLDFFHSKGHTVVPSSSLVPENDPTLLFTNAGMNQFKDVFLGLEKRPYTRATTAQRCVRAGGKHNDLENVGYTARHHTFFEMMGNFSFGDYFKHDAIQFGWEYLTSPQWLGLPKEKLYVTVYETDDEAYDIWNKIVGVPTDHIIRIGDNKGAPYASDNFWAMGDTGPCGPCTEIFYDHGETFWGGLPGSPEEDGDRYIEVWNIVFMQFNRLADGTMEKLPKPSVDTGMGLERMTAVMQHVNSNYETDIFQTLIKEVAGLLNVSDLDNKSLRVVADHIRACSYLIADGVVPSNEGRGYVLRRIIRRAVRHGNLLGAKEAFFYKLVPTLATVMGHAGEVLTQKQAHIQKTLKAEEEQFARTLERGLALLEDALTKVENNTLSGEVAFKLYDTYGFPLDLTADVCRERELTIDEAGFEAEMTAQRERAKASSNFGTDYNNVIKVEGQTDFIGYDNLEAQATIVGLFSNGKAVDTIQSGESAVIILDQTPFYAEMGGQVGDSGLISTEICNFTVNDTQKYGQVFGHIGQLTSGSLSIGDKVTATVHATRRIAITANHSATHLLHSALREVLGDHVAQKGSLVSENILRFDFSQPEAISKSQLEEIERIVNRKIRENIQVTIETMDIESAKKKGAMALFGEKYGDVVRVVGMTEFSIELCGGTHVQRTGDIGLFKLVSEGAVAAGIRRVEAVTAETAIEWLHNQQKVLQQSAEFLKADSNSLVEKIQQLQDKAKRTEKELQQLKDKLAAQAGSELVKQANKINGVNVVVQKLENVEVKSLRTMVDDLKNQLESAIVVFGTVADEKVNLIVGVTKDLSSKVNAGELVGAMAQQVGGKGGGRADMAMAGGSEPQNLDNALKFAEEWIQAKL.

The Zn(2+) site is built by histidine 563, histidine 567, cysteine 665, and histidine 669.

The protein belongs to the class-II aminoacyl-tRNA synthetase family. Zn(2+) is required as a cofactor.

Its subcellular location is the cytoplasm. It carries out the reaction tRNA(Ala) + L-alanine + ATP = L-alanyl-tRNA(Ala) + AMP + diphosphate. Functionally, catalyzes the attachment of alanine to tRNA(Ala) in a two-step reaction: alanine is first activated by ATP to form Ala-AMP and then transferred to the acceptor end of tRNA(Ala). Also edits incorrectly charged Ser-tRNA(Ala) and Gly-tRNA(Ala) via its editing domain. The polypeptide is Alanine--tRNA ligase (Actinobacillus pleuropneumoniae serotype 3 (strain JL03)).